Reading from the N-terminus, the 777-residue chain is Nuclear autoantigenic sperm protein (777 aa).

At Ala-2 the chain carries N-acetylalanine. N6-acetyllysine is present on Lys-34. Residues 44 to 77 form a TPR 1 repeat; sequence AKKLLGLGQKHLVMGDIPAAVNAFQEAASLLGKK. The interval 117–128 is histone-binding; sequence EEEEGEKTEEES. Thr-124 is modified (phosphothreonine). Phosphoserine is present on Ser-128. Basic and acidic residues-rich tracts occupy residues 152–186, 227–259, and 267–276; these read MGEKEAQKTEDKSLVKPEMDKEQETEMEKGGREDM, VTSKKPDQEIPGAEEGKSVSETDVQEECREKGG, and IEEKPKEASK. Residues 152-496 form a disordered region; the sequence is MGEKEAQKTE…ALENKSLQEN (345 aa). Positions 211–244 are histone-binding; the sequence is EEGKGAAAPEGLSEAEVTSKKPDQEIPGAEEGKS. Residue Lys-243 is modified to N6-acetyllysine. Phosphoserine is present on Ser-244. Residue Lys-285 is modified to N6-acetyllysine. Residues 303-319 are compositionally biased toward basic and acidic residues; that stretch reads DEPKEQVAASESERGKA. Ser-312 carries the phosphoserine modification. Low complexity predominate over residues 342 to 353; the sequence is AADASAAEAGSE. 3 positions are modified to phosphoserine: Ser-399, Ser-411, and Ser-440. The tract at residues 458–501 is histone-binding; it reads EQMKEGEETEGSEEEDKENDKAEETLNDSALENKSLQENEEEEI. Residues 464–474 show a composition bias toward acidic residues; it reads EETEGSEEEDK. At Thr-466 the chain carries Phosphothreonine. Ser-469, Ser-486, and Ser-492 each carry phosphoserine. A compositionally biased stretch (polar residues) spans 484 to 493; the sequence is NDSALENKSL. TPR repeat units lie at residues 531–564 and 573–606; these read AQAHLKLGEVSVESENYLQAVEEFQACLNLQEQY and AETHYQLGLAYGYNSQYDEAVAQFSKSIEVIEKR. The stretch at 593 to 648 forms a coiled coil; it reads VAQFSKSIEVIEKRMAVLNEQMKEAEGSPTEYEKEIEELKELLPEIREKIEDAKES. Ser-651 bears the Phosphoserine mark. Residues 667-681 are compositionally biased toward low complexity; it reads STSGFTPSGGSSSVS. The interval 667 to 777 is disordered; it reads STSGFTPSGG…AGATVESTAC (111 aa). Thr-672 bears the Phosphothreonine mark. Phosphoserine is present on residues Ser-694 and Ser-695. The short motif at 705–711 is the Nuclear localization signal element; the sequence is VRKKRKP. Residues 710–728 show a composition bias toward basic and acidic residues; it reads KPEEESPRKDDAKKAKQEP. Phosphoserine is present on Ser-715. Lys-725 participates in a covalent cross-link: Glycyl lysine isopeptide (Lys-Gly) (interchain with G-Cter in SUMO1). The residue at position 734 (Ser-734) is a Phosphoserine.

It belongs to the NASP family. Binds to linker H1 histones. Interacts with histones H2A, H2B, H3 and H4. Interacts with histone H3.3. Interacts with histones H3 and H4; NASP is a histone chaperone that stabilizes and maintains a soluble pool of histone H3-H4 dimers. Interacts with ASF1A and ASF1B; the interaction is probably indirect and mediated by H3-H4. Also binds to HSP90 in the cytoplasm. This interaction stimulates binding of NASP to H1-6/H1T.

Its subcellular location is the cytoplasm. The protein resides in the nucleus. Its function is as follows. Component of the histone chaperone network. Binds and stabilizes histone H3-H4 not bound to chromatin to maintain a soluble reservoir and modulate degradation by chaperone-mediated autophagy. Required for DNA replication, normal cell cycle progression and cell proliferation. Forms a cytoplasmic complex with HSP90 and H1 linker histones and stimulates HSP90 ATPase activity. NASP and H1 histone are subsequently released from the complex and translocate to the nucleus where the histone is released for binding to DNA. This Bos taurus (Bovine) protein is Nuclear autoantigenic sperm protein.